Reading from the N-terminus, the 158-residue chain is MSGFIGKEQHAIDDKGRLMIPARFRRRMTVVPDESLKSSRGSASDAGGLYVMKVPDGSLELYEPSVWAEKEQAIVRLSDFNPDERLLKTLLYESLDCVEMDRQGRIALSREFLQHAGISRDVVIVGANVKMILWAPEKLSKVVRDNASRFQVLAGRYF.

2 SpoVT-AbrB domains span residues 7-66 and 95-138; these read KEQH…EPSV and LDCV…APEK.

This sequence belongs to the MraZ family. As to quaternary structure, forms oligomers.

The protein resides in the cytoplasm. It is found in the nucleoid. In Prosthecochloris aestuarii (strain DSM 271 / SK 413), this protein is Transcriptional regulator MraZ.